A 433-amino-acid polypeptide reads, in one-letter code: Glutamate-1-semialdehyde 2,1-aminomutase (433 aa).

An N6-(pyridoxal phosphate)lysine modification is found at Lys271.

This sequence belongs to the class-III pyridoxal-phosphate-dependent aminotransferase family. HemL subfamily. Homodimer. The cofactor is pyridoxal 5'-phosphate.

It localises to the cytoplasm. The catalysed reaction is (S)-4-amino-5-oxopentanoate = 5-aminolevulinate. It functions in the pathway porphyrin-containing compound metabolism; protoporphyrin-IX biosynthesis; 5-aminolevulinate from L-glutamyl-tRNA(Glu): step 2/2. The protein operates within porphyrin-containing compound metabolism; chlorophyll biosynthesis. This chain is Glutamate-1-semialdehyde 2,1-aminomutase, found in Prochlorococcus marinus (strain MIT 9515).